The following is a 243-amino-acid chain: Adenylate dimethylallyltransferase (243 aa).

The protein belongs to the isopentenyl transferase family.

It carries out the reaction dimethylallyl diphosphate + AMP = N(6)-(dimethylallyl)adenosine 5'-phosphate + diphosphate. Its function is as follows. Transfers dimethylallyl groups to AMP as part of the biosynthesis of cytokinin phytohormones. This Rhizobium rhizogenes (Agrobacterium rhizogenes) protein is Adenylate dimethylallyltransferase (tzs).